The chain runs to 352 residues: Cellular tumor antigen p53 (352 aa).

The transcription activation (acidic) stretch occupies residues 1-48; the sequence is MDPVPDLPESQGSFQELWETVSYPPLETLSLPTVNEPTGSWVATGDMF. Residues 87–273 mediate DNA binding; the sequence is DYPGSYELEL…KTEEESRQKT (187 aa). Residues cysteine 161, histidine 164, cysteine 220, and cysteine 224 each coordinate Zn(2+). An interaction with DNA region spans residues 254-261; that stretch reads RICACPGR. Residues 262 to 271 show a composition bias toward basic and acidic residues; the sequence is DRKTEEESRQ. Positions 262–303 are disordered; sequence DRKTEEESRQKTQPKKRKVTPNTSSSKRKKSHSSGEEEDNRE. A Bipartite nuclear localization signal motif is present at residues 276 to 291; it reads KKRKVTPNTSSSKRKK. An oligomerization region spans residues 302 to 331; sequence REVFHFEVYGRERYEFLKKINDGLELLEKE. The Nuclear export signal motif lies at 316–327; that stretch reads EFLKKINDGLEL. The interval 330 to 352 is disordered; sequence KESKSKNKDSGMVPSSGKKLKSN. A basic (repression of DNA-binding) region spans residues 334 to 350; that stretch reads SKNKDSGMVPSSGKKLK. Serine 351 bears the Phosphoserine mark.

Belongs to the p53 family. Binds DNA as a homotetramer. Zn(2+) serves as cofactor.

It localises to the cytoplasm. The protein localises to the nucleus. Multifunctional transcription factor that induces cell cycle arrest, DNA repair or apoptosis upon binding to its target DNA sequence. Acts as a tumor suppressor in many tumor types; induces growth arrest or apoptosis depending on the physiological circumstances and cell type. Negatively regulates cell division by controlling expression of a set of genes required for this process. One of the activated genes is an inhibitor of cyclin-dependent kinases. Apoptosis induction seems to be mediated either by stimulation of BAX and FAS antigen expression, or by repression of Bcl-2 expression. The sequence is that of Cellular tumor antigen p53 (tp53) from Oryzias latipes (Japanese rice fish).